We begin with the raw amino-acid sequence, 103 residues long: N(4)-acetylcytidine amidohydrolase (103 aa).

The region spanning 6 to 101 (ITFFQRFQDD…QTQFYVIEFK (96 aa)) is the ASCH domain. The active-site Proton acceptor is the lysine 21. Threonine 24 (nucleophile) is an active-site residue. The active-site Proton donor is glutamate 74.

It belongs to the N(4)-acetylcytidine amidohydrolase family.

It carries out the reaction N(4)-acetylcytidine + H2O = cytidine + acetate + H(+). The enzyme catalyses N(4)-acetyl-2'-deoxycytidine + H2O = 2'-deoxycytidine + acetate + H(+). It catalyses the reaction N(4)-acetylcytosine + H2O = cytosine + acetate + H(+). In terms of biological role, catalyzes the hydrolysis of N(4)-acetylcytidine (ac4C). This Escherichia coli O8 (strain IAI1) protein is N(4)-acetylcytidine amidohydrolase (yqfB).